Reading from the N-terminus, the 212-residue chain is Large ribosomal subunit protein uL3 (212 aa).

The span at 136–155 shows a compositional bias: polar residues; sequence THGNSLSHRSNGSIGQNQTP. The interval 136–157 is disordered; that stretch reads THGNSLSHRSNGSIGQNQTPGR. Gln-153 bears the N5-methylglutamine mark.

This sequence belongs to the universal ribosomal protein uL3 family. Part of the 50S ribosomal subunit. Forms a cluster with proteins L14 and L19. Post-translationally, methylated by PrmB.

One of the primary rRNA binding proteins, it binds directly near the 3'-end of the 23S rRNA, where it nucleates assembly of the 50S subunit. In Shewanella putrefaciens (strain CN-32 / ATCC BAA-453), this protein is Large ribosomal subunit protein uL3.